The primary structure comprises 128 residues: 3-aminoacrylate deaminase RutC (128 aa).

It belongs to the RutC family.

It carries out the reaction (Z)-3-aminoacrylate + H2O + H(+) = 3-oxopropanoate + NH4(+). Involved in pyrimidine catabolism. Catalyzes the deamination of 3-aminoacrylate to malonic semialdehyde, a reaction that can also occur spontaneously. RutC may facilitate the reaction and modulate the metabolic fitness, rather than catalyzing essential functions. The protein is 3-aminoacrylate deaminase RutC of Pantoea ananatis (strain LMG 20103).